Here is a 316-residue protein sequence, read N- to C-terminus: Serpentine receptor class gamma-8 (316 aa).

Helical transmembrane passes span Phe-28–Val-48, Pro-60–Thr-80, Leu-106–Thr-126, Phe-147–Ile-167, Ile-186–Ile-206, Ala-235–Leu-255, and Leu-267–Ala-287.

The protein belongs to the nematode receptor-like protein srg family.

It is found in the membrane. In Caenorhabditis elegans, this protein is Serpentine receptor class gamma-8 (srg-8).